The following is a 78-amino-acid chain: U-scoloptoxin(04)-Er1d (78 aa).

Positions methionine 1–alanine 24 are cleaved as a signal peptide. A propeptide spanning residues arginine 25–arginine 28 is cleaved from the precursor.

Belongs to the scoloptoxin-04 family. Post-translationally, contains 2 disulfide bonds. Expressed by the venom gland.

Its subcellular location is the secreted. The polypeptide is U-scoloptoxin(04)-Er1d (Ethmostigmus rubripes (Giant centipede)).